A 154-amino-acid polypeptide reads, in one-letter code: Endoribonuclease YbeY (154 aa).

Zn(2+) contacts are provided by H114, H118, and H124.

The protein belongs to the endoribonuclease YbeY family. Zn(2+) serves as cofactor.

It is found in the cytoplasm. Single strand-specific metallo-endoribonuclease involved in late-stage 70S ribosome quality control and in maturation of the 3' terminus of the 16S rRNA. This Anaplasma phagocytophilum (strain HZ) protein is Endoribonuclease YbeY.